We begin with the raw amino-acid sequence, 483 residues long: Glycogen synthase (483 aa).

Position 15 (Lys15) interacts with ADP-alpha-D-glucose.

This sequence belongs to the glycosyltransferase 1 family. Bacterial/plant glycogen synthase subfamily.

It carries out the reaction [(1-&gt;4)-alpha-D-glucosyl](n) + ADP-alpha-D-glucose = [(1-&gt;4)-alpha-D-glucosyl](n+1) + ADP + H(+). It participates in glycan biosynthesis; glycogen biosynthesis. Functionally, synthesizes alpha-1,4-glucan chains using ADP-glucose. In Exiguobacterium sibiricum (strain DSM 17290 / CCUG 55495 / CIP 109462 / JCM 13490 / 255-15), this protein is Glycogen synthase.